We begin with the raw amino-acid sequence, 298 residues long: Lipoyl synthase (298 aa).

[4Fe-4S] cluster-binding residues include C40, C45, C51, C67, C71, C74, and S280. Residues 53–269 enclose the Radical SAM core domain; that stretch reads AVRRTATFMI…KEIAMAKGFS (217 aa).

This sequence belongs to the radical SAM superfamily. Lipoyl synthase family. [4Fe-4S] cluster serves as cofactor.

The protein resides in the cytoplasm. The catalysed reaction is [[Fe-S] cluster scaffold protein carrying a second [4Fe-4S](2+) cluster] + N(6)-octanoyl-L-lysyl-[protein] + 2 oxidized [2Fe-2S]-[ferredoxin] + 2 S-adenosyl-L-methionine + 4 H(+) = [[Fe-S] cluster scaffold protein] + N(6)-[(R)-dihydrolipoyl]-L-lysyl-[protein] + 4 Fe(3+) + 2 hydrogen sulfide + 2 5'-deoxyadenosine + 2 L-methionine + 2 reduced [2Fe-2S]-[ferredoxin]. It participates in protein modification; protein lipoylation via endogenous pathway; protein N(6)-(lipoyl)lysine from octanoyl-[acyl-carrier-protein]. In terms of biological role, catalyzes the radical-mediated insertion of two sulfur atoms into the C-6 and C-8 positions of the octanoyl moiety bound to the lipoyl domains of lipoate-dependent enzymes, thereby converting the octanoylated domains into lipoylated derivatives. This Bacillus pumilus (strain SAFR-032) protein is Lipoyl synthase.